The primary structure comprises 486 residues: Malonate-semialdehyde dehydrogenase (486 aa).

Positions 154, 178, 181, 182, and 231 each coordinate NAD(+). Cys-286 serves as the catalytic Nucleophile. Glu-386 is an NAD(+) binding site.

The protein belongs to the aldehyde dehydrogenase family. IolA subfamily. Homotetramer.

The enzyme catalyses 3-oxopropanoate + NAD(+) + CoA + H2O = hydrogencarbonate + acetyl-CoA + NADH + H(+). The catalysed reaction is 2-methyl-3-oxopropanoate + NAD(+) + CoA + H2O = propanoyl-CoA + hydrogencarbonate + NADH + H(+). It functions in the pathway polyol metabolism; myo-inositol degradation into acetyl-CoA; acetyl-CoA from myo-inositol: step 7/7. In terms of biological role, catalyzes the oxidation of malonate semialdehyde (MSA) and methylmalonate semialdehyde (MMSA) into acetyl-CoA and propanoyl-CoA, respectively. Is involved in a myo-inositol catabolic pathway. Bicarbonate, and not CO2, is the end-product of the enzymatic reaction. The chain is Malonate-semialdehyde dehydrogenase from Bacillus cytotoxicus (strain DSM 22905 / CIP 110041 / 391-98 / NVH 391-98).